We begin with the raw amino-acid sequence, 98 residues long: Integration host factor subunit alpha (98 aa).

The span at 53–69 (DLREKNERPGRNPKTGE) shows a compositional bias: basic and acidic residues. Residues 53 to 72 (DLREKNERPGRNPKTGEDIP) are disordered.

This sequence belongs to the bacterial histone-like protein family. In terms of assembly, heterodimer of an alpha and a beta chain.

This protein is one of the two subunits of integration host factor, a specific DNA-binding protein that functions in genetic recombination as well as in transcriptional and translational control. The chain is Integration host factor subunit alpha from Vibrio atlanticus (strain LGP32) (Vibrio splendidus (strain Mel32)).